The primary structure comprises 209 residues: Ion-translocating oxidoreductase complex subunit G (209 aa).

The chain crosses the membrane as a helical span at residues 9–29; that stretch reads GLILAVFACVSTGLVALTYAL. At Thr175 the chain carries FMN phosphoryl threonine.

It belongs to the RnfG family. The complex is composed of six subunits: RnfA, RnfB, RnfC, RnfD, RnfE and RnfG. FMN is required as a cofactor.

It is found in the cell inner membrane. Its function is as follows. Part of a membrane-bound complex that couples electron transfer with translocation of ions across the membrane. In Vibrio cholerae serotype O1 (strain ATCC 39315 / El Tor Inaba N16961), this protein is Ion-translocating oxidoreductase complex subunit G.